The following is a 389-amino-acid chain: Serpin B13 (389 aa).

It belongs to the serpin family. Ov-serpin subfamily.

It localises to the cytoplasm. May play a role in the proliferation or differentiation of keratinocytes. This chain is Serpin B13 (Serpinb13), found in Mus musculus (Mouse).